The following is a 163-amino-acid chain: Small ribosomal subunit protein uS9 (163 aa).

Residues 1–25 show a composition bias toward low complexity; the sequence is MAENTNNSAVTETEETTAAFTTETN. Residues 1 to 40 are disordered; that stretch reads MAENTNNSAVTETEETTAAFTTETNSGAGTGTSTIAPGYG.

The protein belongs to the universal ribosomal protein uS9 family.

This Bifidobacterium animalis subsp. lactis (strain AD011) protein is Small ribosomal subunit protein uS9.